A 397-amino-acid chain; its full sequence is Acetate kinase (397 aa).

Residue Asn8 coordinates Mg(2+). Lys15 is an ATP binding site. Arg89 provides a ligand contact to substrate. Asp146 functions as the Proton donor/acceptor in the catalytic mechanism. ATP contacts are provided by residues 206-210 (HVGNG), 283-285 (DMR), and 331-335 (GIGEN). Glu383 is a Mg(2+) binding site.

The protein belongs to the acetokinase family. As to quaternary structure, homodimer. Mg(2+) is required as a cofactor. The cofactor is Mn(2+).

The protein localises to the cytoplasm. It catalyses the reaction acetate + ATP = acetyl phosphate + ADP. It participates in metabolic intermediate biosynthesis; acetyl-CoA biosynthesis; acetyl-CoA from acetate: step 1/2. Its function is as follows. Catalyzes the formation of acetyl phosphate from acetate and ATP. Can also catalyze the reverse reaction. This chain is Acetate kinase, found in Streptococcus thermophilus (strain ATCC BAA-491 / LMD-9).